The primary structure comprises 176 residues: Large ribosomal subunit protein uL6 (176 aa).

It belongs to the universal ribosomal protein uL6 family. Part of the 50S ribosomal subunit.

In terms of biological role, this protein binds to the 23S rRNA, and is important in its secondary structure. It is located near the subunit interface in the base of the L7/L12 stalk, and near the tRNA binding site of the peptidyltransferase center. The sequence is that of Large ribosomal subunit protein uL6 from Burkholderia lata (strain ATCC 17760 / DSM 23089 / LMG 22485 / NCIMB 9086 / R18194 / 383).